Here is a 100-residue protein sequence, read N- to C-terminus: Noncompact myelin-associated protein (100 aa).

Over 1 to 28 the chain is Extracellular; the sequence is MTTATTLGDAVFSLNMTRGEDALYKSSG. A helical membrane pass occupies residues 29–49; the sequence is AIVAAIVVVVIIIVTLVLILL. Over 50-100 the chain is Cytoplasmic; it reads KMYNRRMRTRRELEPKSPKPPVPPALDPSSNGSQQPATVTFDPANVHVETR. Positions 58-100 are disordered; sequence TRRELEPKSPKPPVPPALDPSSNGSQQPATVTFDPANVHVETR.

Glycosylated. In terms of tissue distribution, found in the peripheral nervous system (PNS) Schwann cells (at protein level). Expressed in the PNS, primarily limited to Schwann cells.

It is found in the cell membrane. Plays a role in myelin formation. This chain is Noncompact myelin-associated protein (Ncmap), found in Mus musculus (Mouse).